The following is a 280-amino-acid chain: 3-hydroxyanthranilate 3,4-dioxygenase (280 aa).

Residues 1–160 (MAIPVNVKKW…SEQYKSGKPD (160 aa)) are domain A (catalytic). Arginine 43 contributes to the O2 binding site. Residues histidine 47, glutamate 53, and histidine 91 each contribute to the Fe cation site. Residue glutamate 53 participates in substrate binding. Residues arginine 95 and glutamate 105 each contribute to the substrate site. The tract at residues 161–177 (PAQPIGKMPFFLNTEQV) is linker. The interval 178–280 (MEPFSFQNWL…IALSTSQVPA (103 aa)) is domain B.

The protein belongs to the 3-HAO family. Monomer. Requires Fe(2+) as cofactor.

Its subcellular location is the cytoplasm. It is found in the cytosol. It carries out the reaction 3-hydroxyanthranilate + O2 = (2Z,4Z)-2-amino-3-carboxymuconate 6-semialdehyde. Its pathway is cofactor biosynthesis; NAD(+) biosynthesis; quinolinate from L-kynurenine: step 3/3. Its function is as follows. Catalyzes the oxidative ring opening of 3-hydroxyanthranilate to 2-amino-3-carboxymuconate semialdehyde, which spontaneously cyclizes to quinolinate. The protein is 3-hydroxyanthranilate 3,4-dioxygenase (haao) of Xenopus tropicalis (Western clawed frog).